Consider the following 336-residue polypeptide: HTH-type transcriptional repressor PurR (336 aa).

The HTH lacI-type domain occupies A2–V56. The H-T-H motif DNA-binding region spans I4–N23. A DNA-binding region spans residues S48 to V56. Hypoxanthine is bound by residues Y73, K188, T190, F219, and D273.

Homodimer.

It functions in the pathway purine metabolism; purine nucleotide biosynthesis [regulation]. Is the main repressor of the genes involved in the de novo synthesis of purine nucleotides, regulating purB, purC, purEK, purF, purHD, purL, purMN and guaBA expression. PurR is allosterically activated to bind its cognate DNA by binding the purine corepressors, hypoxanthine or guanine, thereby effecting transcription repression. This Haemophilus influenzae (strain 86-028NP) protein is HTH-type transcriptional repressor PurR.